A 454-amino-acid chain; its full sequence is UPF0210 protein EUBELI_01067 (454 aa).

Belongs to the UPF0210 family. As to quaternary structure, homodimer.

The polypeptide is UPF0210 protein EUBELI_01067 (Lachnospira eligens (strain ATCC 27750 / DSM 3376 / VPI C15-48 / C15-B4) (Eubacterium eligens)).